The primary structure comprises 444 residues: C4-dicarboxylate transport protein (444 aa).

Transmembrane regions (helical) follow at residues 7–29 (LYKSLYFQVIVAIAIGILLGHFY), 44–66 (IKLIKMVIAPIIFCTVVSGIAGM), 79–101 (ALLYFEIVSTIALLIGLVVVNVV), 143–165 (IVGAFANGDILQVLMFSVIFGFA), 186–208 (VMFNIINMIMKLAPIGALGAMAF), 221–243 (LGQLMICFYITCVLFVLVVLGAI), 291–313 (VVGLVIPTGYSFNLDGTSIYLTM), and 353–375 (FIVLAATLSAVGHLPVAGLALIL). A disordered region spans residues 418–444 (SGGRAISDTREEDDLGVAEGPTPTTVK).

The protein belongs to the dicarboxylate/amino acid:cation symporter (DAACS) (TC 2.A.23) family.

It localises to the cell inner membrane. Its function is as follows. Responsible for the transport of dicarboxylates such as succinate, fumarate, and malate from the periplasm across the inner membrane. The protein is C4-dicarboxylate transport protein of Pseudomonas chlororaphis (Pseudomonas aureofaciens).